A 318-amino-acid polypeptide reads, in one-letter code: HPr kinase/phosphorylase (318 aa).

Catalysis depends on residues His-143 and Lys-164. 158-165 (GKSGVGKS) lines the ATP pocket. Residue Ser-165 participates in Mg(2+) binding. Residue Asp-182 is the Proton acceptor; for phosphorylation activity. Proton donor; for dephosphorylation activity of the active site. An important for the catalytic mechanism of both phosphorylation and dephosphorylation region spans residues 206 to 215 (MEIRGLGILN). Mg(2+) is bound at residue Glu-207. The active site involves Arg-248. An important for the catalytic mechanism of dephosphorylation region spans residues 269-274 (PVKPGR).

Belongs to the HPrK/P family. Homohexamer. Requires Mg(2+) as cofactor.

It catalyses the reaction [HPr protein]-L-serine + ATP = [HPr protein]-O-phospho-L-serine + ADP + H(+). The enzyme catalyses [HPr protein]-O-phospho-L-serine + phosphate + H(+) = [HPr protein]-L-serine + diphosphate. Functionally, catalyzes the ATP- as well as the pyrophosphate-dependent phosphorylation of a specific serine residue in HPr, a phosphocarrier protein of the phosphoenolpyruvate-dependent sugar phosphotransferase system (PTS). HprK/P also catalyzes the pyrophosphate-producing, inorganic phosphate-dependent dephosphorylation (phosphorolysis) of seryl-phosphorylated HPr (P-Ser-HPr). The protein is HPr kinase/phosphorylase of Leptospira borgpetersenii serovar Hardjo-bovis (strain L550).